Reading from the N-terminus, the 446-residue chain is Phosphoglucosamine mutase (446 aa).

S100 functions as the Phosphoserine intermediate in the catalytic mechanism. Positions 100, 241, 243, and 245 each coordinate Mg(2+). Position 100 is a phosphoserine (S100).

It belongs to the phosphohexose mutase family. Requires Mg(2+) as cofactor. Post-translationally, activated by phosphorylation.

The enzyme catalyses alpha-D-glucosamine 1-phosphate = D-glucosamine 6-phosphate. Functionally, catalyzes the conversion of glucosamine-6-phosphate to glucosamine-1-phosphate. This Methylobacterium sp. (strain 4-46) protein is Phosphoglucosamine mutase.